Consider the following 552-residue polypeptide: Urocanate hydratase (552 aa).

NAD(+) is bound by residues 49-50, glutamine 127, 173-175, aspartate 193, 239-240, 260-264, 270-271, and tyrosine 319; these read GG, GMG, NA, QTSAH, and YI. The active site involves cysteine 407. Residue glycine 489 coordinates NAD(+).

Belongs to the urocanase family. NAD(+) serves as cofactor.

It localises to the cytoplasm. The catalysed reaction is 4-imidazolone-5-propanoate = trans-urocanate + H2O. Its pathway is amino-acid degradation; L-histidine degradation into L-glutamate; N-formimidoyl-L-glutamate from L-histidine: step 2/3. In terms of biological role, catalyzes the conversion of urocanate to 4-imidazolone-5-propionate. This chain is Urocanate hydratase, found in Bacillus cereus (strain ATCC 10987 / NRS 248).